The chain runs to 310 residues: p-hydroxybenzoic acid efflux pump subunit AaeA (310 aa).

A helical transmembrane segment spans residues 12-32; the sequence is AITLVLVILAFIAIFRAWVYY.

It belongs to the membrane fusion protein (MFP) (TC 8.A.1) family.

Its subcellular location is the cell inner membrane. In terms of biological role, forms an efflux pump with AaeB. The chain is p-hydroxybenzoic acid efflux pump subunit AaeA from Escherichia fergusonii (strain ATCC 35469 / DSM 13698 / CCUG 18766 / IAM 14443 / JCM 21226 / LMG 7866 / NBRC 102419 / NCTC 12128 / CDC 0568-73).